The primary structure comprises 276 residues: Large ribosomal subunit protein uL2 (276 aa).

Residues 212–276 (NRHRGIRPQT…KLIISRKKHK (65 aa)) are disordered. Over residues 257-276 (YKTRKKKASDKLIISRKKHK) the composition is skewed to basic residues.

This sequence belongs to the universal ribosomal protein uL2 family. As to quaternary structure, part of the 50S ribosomal subunit. Forms a bridge to the 30S subunit in the 70S ribosome.

Functionally, one of the primary rRNA binding proteins. Required for association of the 30S and 50S subunits to form the 70S ribosome, for tRNA binding and peptide bond formation. It has been suggested to have peptidyltransferase activity; this is somewhat controversial. Makes several contacts with the 16S rRNA in the 70S ribosome. This chain is Large ribosomal subunit protein uL2, found in Helicobacter pylori (strain P12).